We begin with the raw amino-acid sequence, 216 residues long: Thymidylate kinase (216 aa).

10-17 is a binding site for ATP; it reads GIDGCGKT.

This sequence belongs to the thymidylate kinase family.

It carries out the reaction dTMP + ATP = dTDP + ADP. Its function is as follows. Phosphorylation of dTMP to form dTDP in both de novo and salvage pathways of dTTP synthesis. The sequence is that of Thymidylate kinase from Prochlorococcus marinus (strain MIT 9313).